Consider the following 249-residue polypeptide: Type III pantothenate kinase (249 aa).

Residue 6–13 (DAGNSRIK) participates in ATP binding. Residues F77 and 98-101 (GVDR) each bind substrate. The active-site Proton acceptor is the D100. A K(+)-binding site is contributed by D121. Position 124 (S124) interacts with ATP. Position 177 (T177) interacts with substrate.

It belongs to the type III pantothenate kinase family. In terms of assembly, homodimer. NH4(+) is required as a cofactor. Requires K(+) as cofactor.

The protein resides in the cytoplasm. The enzyme catalyses (R)-pantothenate + ATP = (R)-4'-phosphopantothenate + ADP + H(+). Its pathway is cofactor biosynthesis; coenzyme A biosynthesis; CoA from (R)-pantothenate: step 1/5. Its function is as follows. Catalyzes the phosphorylation of pantothenate (Pan), the first step in CoA biosynthesis. In Teredinibacter turnerae (strain ATCC 39867 / T7901), this protein is Type III pantothenate kinase.